We begin with the raw amino-acid sequence, 363 residues long: NAD(P)H-quinone oxidoreductase subunit 1, chloroplastic (363 aa).

7 consecutive transmembrane segments (helical) span residues 30–50 (FIPIFTPVLGITIGVLVIVWL), 104–124 (IAVISILVSYSVVPFGSHLVL), 129–149 (IGVFLWIAISSIAPIGLLMSG), 248–268 (YSGIKFGLFYVASYLNLLVSS), 269–289 (LFVTILYLGGWNISIPYIFVF), 300–320 (VFEPTIGMFITLAKTYLFLFI), and 336–356 (LLNLGWKFLLPISLGNLLLTT).

It belongs to the complex I subunit 1 family. As to quaternary structure, NDH is composed of at least 16 different subunits, 5 of which are encoded in the nucleus.

It is found in the plastid. The protein resides in the chloroplast thylakoid membrane. The enzyme catalyses a plastoquinone + NADH + (n+1) H(+)(in) = a plastoquinol + NAD(+) + n H(+)(out). The catalysed reaction is a plastoquinone + NADPH + (n+1) H(+)(in) = a plastoquinol + NADP(+) + n H(+)(out). In terms of biological role, NDH shuttles electrons from NAD(P)H:plastoquinone, via FMN and iron-sulfur (Fe-S) centers, to quinones in the photosynthetic chain and possibly in a chloroplast respiratory chain. The immediate electron acceptor for the enzyme in this species is believed to be plastoquinone. Couples the redox reaction to proton translocation, and thus conserves the redox energy in a proton gradient. This Morus indica (Mulberry) protein is NAD(P)H-quinone oxidoreductase subunit 1, chloroplastic.